The chain runs to 503 residues: uncharacterized protein (503 aa).

ABC transporter domains are found at residues 8-249 and 261-499; these read VPVA…LGRD and IVDQ…MSAI. 43 to 50 provides a ligand contact to ATP; the sequence is GKNGAGKS.

Belongs to the ABC transporter superfamily.

In terms of biological role, probably part of a binding-protein-dependent transport system YphDEF. Probably responsible for energy coupling to the transport system. This is an uncharacterized protein from Escherichia coli (strain K12).